A 1120-amino-acid polypeptide reads, in one-letter code: ELKS/Rab6-interacting/CAST family member 1 (1120 aa).

Positions 1-54 are disordered; it reads MYGSARSVGKVEPSSQSPGRSPRLPRSPRLGHRRTNSTGGSSGNSVGGGSGKTL. At Lys-10 the chain carries N6-acetyllysine. Residues 13 to 28 are compositionally biased toward low complexity; that stretch reads PSSQSPGRSPRLPRSP. Ser-17, Ser-21, and Ser-37 each carry phosphoserine. Thr-38 carries the phosphothreonine modification. Positions 40-51 are enriched in gly residues; that stretch reads GSSGNSVGGGSG. A phosphoserine mark is found at Ser-55, Ser-75, Ser-94, Ser-824, Leu-965, and Ser-1009. A coiled-coil region spans residues 144 to 992; the sequence is RQARDNTIMD…RMKLMADNYE (849 aa). Residues 801–824 show a composition bias toward basic and acidic residues; the sequence is KHKEQVEKKKSAQMLEEARRREDS. Positions 801-840 are disordered; that stretch reads KHKEQVEKKKSAQMLEEARRREDSLSDSSQQLQDSLRKKD. Thr-1050 carries the post-translational modification Phosphothreonine. In terms of domain architecture, FIP-RBD spans 1050–1112; the sequence is TPPASYNADG…DHCPDILEQV (63 aa). The stretch at 1060–1104 forms a coiled coil; it reads EQAAWENELQQMTQEQLQNELEKVEGDNAELQEFANTILQQIADH.

In terms of assembly, interacts with the GTB-bound forms of RAB6A isoform 1 and isoform 2 and with RAB6B. The interaction was strongest with RAB6B, followed by RAB6A isoform 2 and weakest with RAB6A isoform 1. Part of a complex with CHUK, IKBKB and IKBKG. Interacts with CHUK, IKBKB and IKBKG. The interaction with IKBKG is independent of CHUK and IKBKB. Interacts with NFKBIA. Isoform 2 interacts through its C-terminus with the PDZ domains of RIMS1 and RIMS2. Interacts with ERC2/CAST1. Interacts with SDCCAG8. Part of a cortical microtubule stabilization complex (CMSC) composed of KANK1, PPFIA1, PPFIBP1, ERC1/ELKS, PHLDB2/LL5beta, CLASPs, KIF21A and possibly additional interactors; within CMSCs KANK1 and PHLDB2/LL5beta appear to be the core components for targeting of microtubule-binding proteins KIF21A and CLASPs, whereas PPFIA1, PPFIBP1 and ERC1/ELKS serve as scaffolds for protein clustering. As to expression, widely expressed.

Its subcellular location is the cytoplasm. The protein localises to the cytoskeleton. The protein resides in the microtubule organizing center. It is found in the centrosome. It localises to the membrane. Its subcellular location is the golgi apparatus membrane. The protein localises to the presynaptic active zone. The protein resides in the cell projection. It is found in the podosome. Its function is as follows. Regulatory subunit of the IKK complex. Probably recruits IkappaBalpha/NFKBIA to the complex. May be involved in the organization of the cytomatrix at the nerve terminals active zone (CAZ) which regulates neurotransmitter release. May be involved in vesicle trafficking at the CAZ. May be involved in Rab-6 regulated endosomes to Golgi transport. The polypeptide is ELKS/Rab6-interacting/CAST family member 1 (Mus musculus (Mouse)).